The following is a 344-amino-acid chain: Selenide, water dikinase (344 aa).

Sec-16 is an active-site residue. Sec-16 is a non-standard amino acid (selenocysteine). ATP is bound by residues Lys-19 and Thr-46 to Asp-48. Mg(2+) is bound at residue Asp-49. ATP is bound by residues Asp-66, Asp-89, and Gly-135–Thr-137. Asp-89 provides a ligand contact to Mg(2+). Asp-223 serves as a coordination point for Mg(2+).

Belongs to the selenophosphate synthase 1 family. Class I subfamily. Homodimer. Requires Mg(2+) as cofactor.

The catalysed reaction is hydrogenselenide + ATP + H2O = selenophosphate + AMP + phosphate + 2 H(+). Synthesizes selenophosphate from selenide and ATP. The sequence is that of Selenide, water dikinase from Caldanaerobacter subterraneus subsp. tengcongensis (strain DSM 15242 / JCM 11007 / NBRC 100824 / MB4) (Thermoanaerobacter tengcongensis).